The primary structure comprises 1541 residues: Regulator of G-protein signaling loco (1541 aa).

The tract at residues 1 to 66 (MHHHHPPLPI…RRKKRANYNY (66 aa)) is disordered. Low complexity predominate over residues 11–36 (TGASGSTAVGTGAAAAEDASPAANSG). Positions 40–53 (ISTSTTPSGSNSQQ) are enriched in polar residues. Residues 71–148 (TVEVRRGYNG…SIRMQIAENY (78 aa)) enclose the PDZ domain. Positions 182 to 222 (AKLHRLRNSPQKKLNPPEAVEPHKSKSSPDHPTLKPVLEDP) are disordered. Over residues 201–214 (VEPHKSKSSPDHPT) the composition is skewed to basic and acidic residues. The region spanning 247–423 (AALECRVIVG…VVNLVRSMYT (177 aa)) is the PID domain. Disordered regions lie at residues 449 to 473 (GAVAAAHSPQPSNHSEISTTTSNSD) and 708 to 761 (SEPD…ASMN). Polar residues-rich tracts occupy residues 457–473 (PQPSNHSEISTTTSNSD) and 744–761 (EQQQLGQSSPVRRTASMN). In terms of domain architecture, RGS spans 827–943 (SFERMLQDAA…IRSDLYKSCV (117 aa)). The disordered stretch occupies residues 978-1004 (SASNAEDRRRKSLLPWHRKTRSKSRDR). The segment covering 987–999 (RKSLLPWHRKTRS) has biased composition (basic residues). RBD domains lie at 1072-1142 (SLCR…IERR) and 1143-1213 (VAFK…IVMV). The disordered stretch occupies residues 1258–1327 (DAAASEKSRP…SEEAATTQAV (70 aa)). Over residues 1273–1285 (MKSNEAPSETSSL) the composition is skewed to polar residues. Residues 1312 to 1325 (TSSSQQSEEAATTQ) are compositionally biased toward low complexity. Residues 1354-1376 (QDELLEGLKRAQLARLEDQRGTE) enclose the GoLoco domain. Residues 1410–1513 (KVPATPTEIP…ASKPGTFASK (104 aa)) are disordered. The segment covering 1460–1469 (APPPLPPKPK) has biased composition (pro residues). The segment covering 1483–1499 (PTGNYCNKYSPSKQVPT) has biased composition (polar residues).

As to quaternary structure, interacts (via GoLoco and RGS domains) with Galphai (via GDP- or GTP-bound forms). In terms of tissue distribution, expressed in surface and longitudinal glial cells, gut and heart (at protein level).

It is found in the cytoplasm. Its subcellular location is the cell membrane. The protein resides in the apical cell membrane. Functionally, acts as a regulator of G protein signaling (RGS). Modulates G protein alpha subunits nucleotide exchange and hydrolysis activities by functioning either as a GTPase-activating protein (GAP), thereby driving G protein alpha subunits into their inactive GDP-bound form, or as a GDP-dissociation inhibitor (GDI). Confers GDI and GAP activities on G(i) alpha subunit Galphai. Confers GAP activity on G(o)-alpha subunit Galphao and G(i) alpha subunit Galphai. Involved in the dorsal-ventral axis formation of the egg. Acts as a G-protein signaling for glial cell differentiation during embryogenesis; Galphai, Galphao and the G-protein coupled receptor, moody, are required in the surface glia to achieve effective insulation of the nerve cord. May be essential for nurse cell dumping during oogenesis. Required in neuroblast asymmetrical cell division. Plays a role in stress resistance and life span control. This chain is Regulator of G-protein signaling loco (loco), found in Drosophila melanogaster (Fruit fly).